The chain runs to 608 residues: DNA mismatch repair protein MutL (608 aa).

Belongs to the DNA mismatch repair MutL/HexB family.

In terms of biological role, this protein is involved in the repair of mismatches in DNA. It is required for dam-dependent methyl-directed DNA mismatch repair. May act as a 'molecular matchmaker', a protein that promotes the formation of a stable complex between two or more DNA-binding proteins in an ATP-dependent manner without itself being part of a final effector complex. The polypeptide is DNA mismatch repair protein MutL (Elusimicrobium minutum (strain Pei191)).